Reading from the N-terminus, the 398-residue chain is MDSNFHYSIDLNEDQNHHEQPFFYPLGSSSSLHHHHHHHHHQVPSNSSSSSSSISSLSSYLPFLINSQEDQHVAYNNTYHADHLHLSQPLKAKMFVANGGSSACDHMVPKKETRLKLTIRKKDHEDQPHPLHQNPTKPDSDSDKWLMSPKMRLIKKTITNNKQLIDQTNNNNHKESDHYPLNHKTNFDEDHHEDLNFKNVLTRKTTAATTENRYNTINENGYSNNNGVIRVCSDCNTTKTPLWRSGPRGPKSLCNACGIRQRKARRAAMAAAAAAGDQEVAVAPRVQQLPLKKKLQNKKKRSNGGEKYNHSPPMVAKAKKCKIKEEEEKEMEAETVAGDSEISKSTTSSNSSISSNKFCFDDLTIMLSKSSAYQQVFPQDEKEAAVLLMALSYGMVHG.

Positions 20–51 are disordered; sequence QPFFYPLGSSSSLHHHHHHHHHQVPSNSSSSS. A compositionally biased stretch (basic residues) spans 32-42; sequence LHHHHHHHHHQ. The Nuclear localization signal motif lies at 109-116; sequence PKKETRLK. Residues 122-144 are disordered; it reads KDHEDQPHPLHQNPTKPDSDSDK. The GATA-type zinc-finger motif lies at 226–280; that stretch reads NGVIRVCSDCNTTKTPLWRSGPRGPKSLCNACGIRQRKARRAAMAAAAAAGDQEV. Positions 289–353 are disordered; that stretch reads LPLKKKLQNK…KSTTSSNSSI (65 aa). The span at 291 to 302 shows a compositional bias: basic residues; that stretch reads LKKKLQNKKKRS. Over residues 343-353 the composition is skewed to low complexity; it reads SKSTTSSNSSI.

It belongs to the type IV zinc-finger family. Class B subfamily. As to quaternary structure, interacts with SNL1. Forms heterodimers with GATA18. In terms of tissue distribution, expressed predominantly in leaves, and barely in stems, flowers and siliques.

The protein localises to the nucleus. In terms of biological role, transcriptional regulator that specifically binds 5'-GATA-3' or 5'-GAT-3' motifs within gene promoters. Involved in the modulation of chloroplast development, growth and division in a cytokinin-dependent manner. Repressor of the gibberellic acid (GA) signaling pathway that represses flowering and modulates greening, in a SOC1-dependent manner. Prevents the accumulation of SOC1 during flowering. Promotes chlorophyll biosynthesis throughout the plant, by regulating chlorophyll biosynthetic genes (e.g. HEMA1 and GUN4) and chloroplast localized glutamate synthase (e.g. GLU1). Involved in the regulation of sugar-sensing genes (e.g. HXK1, HXK2, STP13 and PLT6). Regulator of germination, senescence, elongation growth and flowering time. Also influences leaf starch content. The protein is GATA transcription factor 21 of Arabidopsis thaliana (Mouse-ear cress).